We begin with the raw amino-acid sequence, 243 residues long: Methylthioribulose-1-phosphate dehydratase (243 aa).

The tract at residues 1 to 22 (MCPADQTVATNNNDHLVQSEDP) is disordered. A compositionally biased stretch (polar residues) spans 7–16 (TVATNNNDHL). A substrate-binding site is contributed by cysteine 103. Positions 120 and 122 each coordinate Zn(2+). The active-site Proton donor/acceptor is glutamate 149. Histidine 205 serves as a coordination point for Zn(2+).

This sequence belongs to the aldolase class II family. MtnB subfamily. Requires Zn(2+) as cofactor.

Its subcellular location is the cytoplasm. It carries out the reaction 5-(methylsulfanyl)-D-ribulose 1-phosphate = 5-methylsulfanyl-2,3-dioxopentyl phosphate + H2O. The protein operates within amino-acid biosynthesis; L-methionine biosynthesis via salvage pathway; L-methionine from S-methyl-5-thio-alpha-D-ribose 1-phosphate: step 2/6. Functionally, catalyzes the dehydration of methylthioribulose-1-phosphate (MTRu-1-P) into 2,3-diketo-5-methylthiopentyl-1-phosphate (DK-MTP-1-P). The protein is Methylthioribulose-1-phosphate dehydratase of Penicillium rubens (strain ATCC 28089 / DSM 1075 / NRRL 1951 / Wisconsin 54-1255) (Penicillium chrysogenum).